The following is a 208-amino-acid chain: Ubiquitin-conjugating enzyme E2 S (208 aa).

The UBC core domain maps to 14 to 160 (QTIRQVMKEL…ARMMTEIHAQ (147 aa)). The active-site Glycyl thioester intermediate is Cys98. Positions 161 to 193 (PAKCGAGASDAKDDDGPSTKKHAGLDKKLQDKK) are disordered. Residues 170 to 193 (DAKDDDGPSTKKHAGLDKKLQDKK) show a composition bias toward basic and acidic residues.

Belongs to the ubiquitin-conjugating enzyme family.

The catalysed reaction is S-ubiquitinyl-[E1 ubiquitin-activating enzyme]-L-cysteine + [E2 ubiquitin-conjugating enzyme]-L-cysteine = [E1 ubiquitin-activating enzyme]-L-cysteine + S-ubiquitinyl-[E2 ubiquitin-conjugating enzyme]-L-cysteine.. Its pathway is protein modification; protein ubiquitination. In terms of biological role, catalyzes the covalent attachment of ubiquitin to other proteins. Acts as an essential factor of the anaphase promoting complex/cyclosome (APC/C), a cell cycle-regulated ubiquitin ligase that controls progression through mitosis. Acts by specifically elongating polyubiquitin chains initiated by the E2 enzyme vih/UbcH10 on APC/C substrates, enhancing the degradation of APC/C substrates by the proteasome and promoting mitotic exit. The chain is Ubiquitin-conjugating enzyme E2 S from Drosophila virilis (Fruit fly).